The primary structure comprises 217 residues: N-(5'-phosphoribosyl)anthranilate isomerase (217 aa).

This sequence belongs to the TrpF family.

It catalyses the reaction N-(5-phospho-beta-D-ribosyl)anthranilate = 1-(2-carboxyphenylamino)-1-deoxy-D-ribulose 5-phosphate. It functions in the pathway amino-acid biosynthesis; L-tryptophan biosynthesis; L-tryptophan from chorismate: step 3/5. This chain is N-(5'-phosphoribosyl)anthranilate isomerase, found in Synechococcus elongatus (strain ATCC 33912 / PCC 7942 / FACHB-805) (Anacystis nidulans R2).